Consider the following 200-residue polypeptide: MSLSIDVTSLPSISSSVYKNESSSTTSTISGKSIGRSEQYISPDAEAFNKYMLSKSPEDIGPSDSASNDPLTSFSIRSNAVKTNADAGVSMDSSAQSRPSSDIGYDQMDFSLNKGIKIDATVDSSISISTTSQKEKSKQENKNKYKKCYPKIEAESDSDDYILDDSDSDDGKCKNCKYKKKYFALRLRMKQVAMQLIKDL.

3 disordered regions span residues Ile13–Glu38, Leu53–Thr72, and Ala85–Asp106. Residues Ser22–Ser37 are compositionally biased toward low complexity. At Ser67 the chain carries Phosphoserine; by host CK1. Residues Met91–Ser100 are compositionally biased toward polar residues. Asp92 contacts Mg(2+). Phosphoserine; by host is present on residues Ser156, Ser158, Ser166, and Ser168.

This sequence belongs to the rotavirus NSP5 family. In terms of assembly, homodimer. Interacts with VP1. Interacts with VP2. Interacts with NSP2; this interaction leads to up-regulation of NSP5 hyperphosphorylation and formation of virus factories. Interacts with NSP6. Participates in the selective exclusion of host proteins from stress granules (SG) and P bodies (PB). Also participates in the sequestration of these remodeled organelles in viral factories. Mg(2+) serves as cofactor. In terms of processing, O-glycosylated. Hyperphosphorylated on serine residues, when in dimeric form. Phosphorylation by host CK1 is required for the hyperphosphorylation of NSP5 dimer.

It localises to the host cytoplasm. Plays an essential role in the viral genome replication. Participates, together with NSP2, in the formation of viral factories (viroplasms), which are large inclusions in the host cytoplasm where replication intermediates are assembled and viral RNA replication takes place. Orchestrates the recruitment of viroplasmic proteins such as capsid proteins to these factories. Participates in the selective exclusion of host proteins from stress granules (SG) and P bodies (PB). Also participates in the sequestration of these remodeled organelles in viral factories. The protein is Non-structural protein 5 of Homo sapiens (Human).